Here is a 96-residue protein sequence, read N- to C-terminus: Myticin-B (96 aa).

A signal peptide spans 1–20 (MKATMLLAVVVAVFVAGTEA). A propeptide spans 61-96 (VKFPFGATQDAKSMNELEYTPIMKSMENLDNGMDML) (removed in mature form).

Contains four disulfide bonds. As to expression, hemocytes.

It localises to the secreted. In terms of biological role, bacteriolytic activity against Gram-positive bacteria M.luteus, B.megaterium and A.viridans and Gram-negative bacteria E.coli D31. Possesses antifungal activity against F.oxysporum. In Mytilus galloprovincialis (Mediterranean mussel), this protein is Myticin-B.